A 194-amino-acid polypeptide reads, in one-letter code: Peptide deformylase (194 aa).

Residues 71–93 (DAEPEECGHDHGDGEGAHKHYPV) are disordered. Positions 76–93 (ECGHDHGDGEGAHKHYPV) are enriched in basic and acidic residues. Fe cation is bound by residues Cys119 and His161. Glu162 is a catalytic residue. His165 provides a ligand contact to Fe cation.

This sequence belongs to the polypeptide deformylase family. The cofactor is Fe(2+).

It catalyses the reaction N-terminal N-formyl-L-methionyl-[peptide] + H2O = N-terminal L-methionyl-[peptide] + formate. Its function is as follows. Removes the formyl group from the N-terminal Met of newly synthesized proteins. Requires at least a dipeptide for an efficient rate of reaction. N-terminal L-methionine is a prerequisite for activity but the enzyme has broad specificity at other positions. This is Peptide deformylase from Erythrobacter litoralis (strain HTCC2594).